Reading from the N-terminus, the 448-residue chain is Histidinol dehydrogenase (448 aa).

Residues Tyr-136, Gln-197, and Asn-220 each contribute to the NAD(+) site. Substrate contacts are provided by Ser-243, Gln-265, and His-268. Positions 265 and 268 each coordinate Zn(2+). Catalysis depends on proton acceptor residues Glu-333 and His-334. Substrate-binding residues include His-334, Asp-367, Glu-421, and His-426. Zn(2+) is bound at residue Asp-367. Zn(2+) is bound at residue His-426.

Belongs to the histidinol dehydrogenase family. Requires Zn(2+) as cofactor.

It carries out the reaction L-histidinol + 2 NAD(+) + H2O = L-histidine + 2 NADH + 3 H(+). Its pathway is amino-acid biosynthesis; L-histidine biosynthesis; L-histidine from 5-phospho-alpha-D-ribose 1-diphosphate: step 9/9. Functionally, catalyzes the sequential NAD-dependent oxidations of L-histidinol to L-histidinaldehyde and then to L-histidine. The chain is Histidinol dehydrogenase from Pseudomonas syringae pv. tomato (strain ATCC BAA-871 / DC3000).